The following is a 117-amino-acid chain: uncharacterized protein (117 aa).

Belongs to the transposase 34 family.

This is an uncharacterized protein from Sinorhizobium fredii (strain NBRC 101917 / NGR234).